Here is a 141-residue protein sequence, read N- to C-terminus: Nucleoside diphosphate kinase (141 aa).

Positions 11, 59, 87, 93, 104, and 114 each coordinate ATP. His-117 (pros-phosphohistidine intermediate) is an active-site residue.

This sequence belongs to the NDK family. As to quaternary structure, homotetramer. Mg(2+) serves as cofactor.

The protein resides in the cytoplasm. The enzyme catalyses a 2'-deoxyribonucleoside 5'-diphosphate + ATP = a 2'-deoxyribonucleoside 5'-triphosphate + ADP. The catalysed reaction is a ribonucleoside 5'-diphosphate + ATP = a ribonucleoside 5'-triphosphate + ADP. Major role in the synthesis of nucleoside triphosphates other than ATP. The ATP gamma phosphate is transferred to the NDP beta phosphate via a ping-pong mechanism, using a phosphorylated active-site intermediate. This is Nucleoside diphosphate kinase from Polynucleobacter necessarius subsp. necessarius (strain STIR1).